The primary structure comprises 678 residues: Translation factor GUF1 homolog, chloroplastic (678 aa).

Residues 1 to 43 (MASILLSLNTHTLLPLHTRTRTTKTTLKILRFSHKLPPSSPFY) constitute a chloroplast transit peptide. One can recognise a tr-type G domain in the interval 81–262 (KNIRNFCIIA…AIVERVPPPR (182 aa)). Residues 90 to 97 (AHIDHGKS), 155 to 159 (DTPGH), and 209 to 212 (NKID) contribute to the GTP site.

This sequence belongs to the TRAFAC class translation factor GTPase superfamily. Classic translation factor GTPase family. LepA subfamily.

The protein localises to the plastid. Its subcellular location is the chloroplast. The catalysed reaction is GTP + H2O = GDP + phosphate + H(+). Promotes chloroplast protein synthesis. May act as a fidelity factor of the translation reaction, by catalyzing a one-codon backward translocation of tRNAs on improperly translocated ribosomes. The protein is Translation factor GUF1 homolog, chloroplastic of Populus trichocarpa (Western balsam poplar).